The following is a 111-amino-acid chain: Resistin-like gamma (111 aa).

The signal sequence occupies residues 1-23 (MKTAICSLLICIFLLQLMVPVNT). Cystine bridges form between Cys55–Cys108, Cys67–Cys107, Cys76–Cys93, Cys78–Cys95, and Cys82–Cys97.

It belongs to the resistin/FIZZ family. In terms of assembly, homodimer. Heterodimer with RETNLB. In terms of tissue distribution, highly expressed in bone marrow, spleen and white blood cells. Also detected at low levels in thymus, lung, trachea, white adipose tissue, nasal respiratory epithelium, colon, small intestine, kidney, liver, and heart.

Its subcellular location is the secreted. Functionally, probable hormone. Promotes chemotaxis in myeloid cells. The chain is Resistin-like gamma from Rattus norvegicus (Rat).